Here is an 839-residue protein sequence, read N- to C-terminus: Oligopeptide transporter phomP2 (839 aa).

A disordered region spans residues 1–58 (MEADPKVPFTDEMNIQDEHNWESGSWSSSRRSNDSNVTLLSRRSSVEQHEDERQKDSD). The segment covering 23–36 (SGSWSSSRRSNDSN) has biased composition (low complexity). 2 N-linked (GlcNAc...) asparagine glycosylation sites follow: Asn-33 and Asn-36. The span at 44 to 58 (SSVEQHEDERQKDSD) shows a compositional bias: basic and acidic residues. The next 6 helical transmembrane spans lie at 105–125 (VWLL…VYYF), 177–197 (ALVV…GPLS), 210–230 (PWAI…VGLY), 268–288 (VFMA…FVFP), 315–335 (GFGL…SPLF), and 345–365 (FVGA…SDAL). N-linked (GlcNAc...) asparagine glycosylation is found at Asn-386 and Asn-398. 4 helical membrane-spanning segments follow: residues 415–435 (AMHF…AVLF), 478–498 (AWYA…LYAG), 505–525 (WGLQ…GMLF), and 585–605 (WELL…NWAV). Gly residues predominate over residues 629-646 (QGLGLGQGGGGGGGGGGQ). The disordered stretch occupies residues 629–654 (QGLGLGQGGGGGGGGGGQQQRAAGAH). The next 3 helical transmembrane spans lie at 665-685 (NFFS…FGGG), 697-717 (WLLP…WLIH), and 728-748 (WPLH…FPTT). N-linked (GlcNAc...) asparagine glycosylation is present at Asn-749. Residues 781-801 (AGLDCGAQLVQMVLGVAFLVF) traverse the membrane as a helical segment.

It belongs to the oligopeptide OPT transporter family.

It is found in the membrane. Its function is as follows. Oligopeptide transporter; part of the gene cluster that mediates the biosynthesis of the phomopsins, a group of hexapeptide mycotoxins which infects lupins and causes lupinosis disease in livestock. The protein is Oligopeptide transporter phomP2 of Diaporthe leptostromiformis (Lupinosis disease fungus).